Reading from the N-terminus, the 619-residue chain is 1-deoxy-D-xylulose-5-phosphate synthase (619 aa).

Residues His-74 and 115-117 (GHS) contribute to the thiamine diphosphate site. Asp-146 is a binding site for Mg(2+). Thiamine diphosphate is bound by residues 147–148 (GA), Asn-175, and Tyr-285. Residue Asn-175 coordinates Mg(2+). Residues 289–310 (EKSPSKYHGIPPSNDKKEEPNK) form a disordered region. Position 365 (Glu-365) interacts with thiamine diphosphate.

It belongs to the transketolase family. DXPS subfamily. Homodimer. It depends on Mg(2+) as a cofactor. Thiamine diphosphate is required as a cofactor.

It catalyses the reaction D-glyceraldehyde 3-phosphate + pyruvate + H(+) = 1-deoxy-D-xylulose 5-phosphate + CO2. It functions in the pathway metabolic intermediate biosynthesis; 1-deoxy-D-xylulose 5-phosphate biosynthesis; 1-deoxy-D-xylulose 5-phosphate from D-glyceraldehyde 3-phosphate and pyruvate: step 1/1. Catalyzes the acyloin condensation reaction between C atoms 2 and 3 of pyruvate and glyceraldehyde 3-phosphate to yield 1-deoxy-D-xylulose-5-phosphate (DXP). This Clostridium botulinum (strain Alaska E43 / Type E3) protein is 1-deoxy-D-xylulose-5-phosphate synthase.